The sequence spans 353 residues: 3'(2'),5'-bisphosphate nucleotidase (353 aa).

The active-site Proton acceptor is Asp-50. Residues Glu-73, Asp-136, Ile-138, and Asp-139 each coordinate Mg(2+). The Proton acceptor role is filled by Thr-141. Residues Thr-141, His-232, Ser-256, Lys-259, Arg-273, and Asp-286 each coordinate adenosine 3',5'-bisphosphate. AMP is bound by residues His-232, Ser-256, Lys-259, Arg-273, and Asp-286. Residue Asp-286 coordinates Mg(2+).

This sequence belongs to the inositol monophosphatase superfamily. Mg(2+) is required as a cofactor.

The catalysed reaction is 3'-phosphoadenylyl sulfate + H2O = adenosine 5'-phosphosulfate + phosphate. It catalyses the reaction adenosine 3',5'-bisphosphate + H2O = AMP + phosphate. The enzyme catalyses adenosine 2',5'-bisphosphate + H2O = AMP + phosphate. It carries out the reaction 1D-myo-inositol 1,4-bisphosphate + H2O = 1D-myo-inositol 4-phosphate + phosphate. The catalysed reaction is 1D-myo-inositol 1,3,4-trisphosphate + H2O = 1D-myo-inositol 3,4-bisphosphate + phosphate. Its activity is regulated as follows. Inhibited by Li(+) and Na(+). Phosphatase that converts adenosine 3'-phosphate 5'-phosphosulfate (PAPS) to adenosine 5'-phosphosulfate (APS) and 3'(2')-phosphoadenosine 5'-phosphate (PAP) to AMP. May regulate the flux of sulfur in the sulfur-activation pathway by converting PAPS to APS. Is also able to hydrolyze inositol 1,4-bisphosphate (Ins(1,4)P2) and inositol 1,3,4-trisphosphate (Ins(1,3,4)P3), but is not active on inositol 1,4,5-trisphosphate, inositol 1-phosphate, fructose 1,6-bisphosphate, AMP and ATP. Its function is as follows. Confers resistance to lithium. In Schizosaccharomyces pombe (strain 972 / ATCC 24843) (Fission yeast), this protein is 3'(2'),5'-bisphosphate nucleotidase (tol1).